The sequence spans 868 residues: mRNA-capping enzyme (868 aa).

Lys282 (N6-GMP-lysine intermediate) is an active-site residue. Residues 594-868 (GIYRAQTALI…LFGFICLRKN (275 aa)) enclose the mRNA cap 0 methyltransferase domain. S-adenosyl-L-methionine-binding positions include Lys607, Gly624, Asp646, and 710 to 712 (LFI).

In the N-terminal section; belongs to the dsDNA virus mRNA guanylyltransferase family. This sequence in the C-terminal section; belongs to the class I-like SAM-binding methyltransferase superfamily. mRNA cap 0 methyltransferase family. As to quaternary structure, part of the viral DNA-directed RNA polymerase that consists of 8 polII-like subunits (RPB1, RPB2, RPB3, RPB5, RPB6, RPB7, RPB9, RPB10), a capping enzyme and a termination factor.

The protein resides in the virion. It catalyses the reaction a 5'-end triphospho-ribonucleoside in mRNA + H2O = a 5'-end diphospho-ribonucleoside in mRNA + phosphate + H(+). The enzyme catalyses a 5'-end diphospho-ribonucleoside in mRNA + GTP + H(+) = a 5'-end (5'-triphosphoguanosine)-ribonucleoside in mRNA + diphosphate. It carries out the reaction a 5'-end (5'-triphosphoguanosine)-ribonucleoside in mRNA + S-adenosyl-L-methionine = a 5'-end (N(7)-methyl 5'-triphosphoguanosine)-ribonucleoside in mRNA + S-adenosyl-L-homocysteine. Its pathway is mRNA processing; mRNA capping. Functionally, probably catalyzes the second reaction in the mRNA cap formation pathway. Forms a covalent complex with GTP. The protein is mRNA-capping enzyme of Ornithodoros (relapsing fever ticks).